The chain runs to 112 residues: Large ribosomal subunit protein P2-B (112 aa).

The disordered stretch occupies residues 89–112 (APAAADAKKEEEEEDDDMGFGLFD).

This sequence belongs to the eukaryotic ribosomal protein P1/P2 family. As to quaternary structure, P1 and P2 exist as dimers at the large ribosomal subunit. Post-translationally, phosphorylated.

In terms of biological role, plays an important role in the elongation step of protein synthesis. The protein is Large ribosomal subunit protein P2-B of Trypanosoma cruzi.